Consider the following 261-residue polypeptide: Thiazole synthase (261 aa).

The active-site Schiff-base intermediate with DXP is K98. 1-deoxy-D-xylulose 5-phosphate-binding positions include G159, 185 to 186, and 207 to 208; these read AG and AS.

It belongs to the ThiG family. As to quaternary structure, homotetramer. Forms heterodimers with either ThiH or ThiS.

The protein localises to the cytoplasm. The enzyme catalyses [ThiS sulfur-carrier protein]-C-terminal-Gly-aminoethanethioate + 2-iminoacetate + 1-deoxy-D-xylulose 5-phosphate = [ThiS sulfur-carrier protein]-C-terminal Gly-Gly + 2-[(2R,5Z)-2-carboxy-4-methylthiazol-5(2H)-ylidene]ethyl phosphate + 2 H2O + H(+). The protein operates within cofactor biosynthesis; thiamine diphosphate biosynthesis. In terms of biological role, catalyzes the rearrangement of 1-deoxy-D-xylulose 5-phosphate (DXP) to produce the thiazole phosphate moiety of thiamine. Sulfur is provided by the thiocarboxylate moiety of the carrier protein ThiS. In vitro, sulfur can be provided by H(2)S. The chain is Thiazole synthase from Mycobacterium leprae (strain Br4923).